The primary structure comprises 531 residues: Transmembrane protein 266 (531 aa).

The Cytoplasmic portion of the chain corresponds to 1-102 (MALAASFNMT…VFLLSASLNS (102 aa)). The helical transmembrane segment at 103–123 (FLVACVILVVILLTLELLIDI) threads the bilayer. The Extracellular portion of the chain corresponds to 124–129 (KLLQFS). A helical transmembrane segment spans residues 130–150 (SAFQFAGVIHWISLVILSVFF). Residues 151–169 (SETVLRIVVLGIWDYIENK) are Cytoplasmic-facing. A helical transmembrane segment spans residues 170 to 190 (IEVFDGAVIILSLAPMVASTV). The Extracellular portion of the chain corresponds to 191-199 (ANGPRSPWD). A helical transmembrane segment spans residues 200–220 (AISLIIMLRIWRVKRVIDAYV). Residues 221-531 (LPVKLEMEMV…EQKLHRVPEA (311 aa)) lie on the Cytoplasmic side of the membrane. Positions 231–251 (IQQYEKAKVIQDEQLERLTQI) form a coiled coil. A disordered region spans residues 380-477 (NGTGATSESA…PAGSAQTSPE (98 aa)). Over residues 383-412 (GATSESASRSSVTRAQSDSSQTLGSSTDCS) the composition is skewed to polar residues. The span at 421 to 431 (EPGPSPLPLPP) shows a compositional bias: pro residues.

As to quaternary structure, homodimer; disulfide-linked.

The protein localises to the cell membrane. It localises to the cell projection. Its subcellular location is the dendrite. It is found in the perikaryon. Functionally, voltage-sensor protein present on the post-synaptic side of glutamatergic mossy fibers and granule cells in the cerebellum. Despite the presence of a voltage-sensor segment, does not form a functional ion channel and its precise role remains unclear. Undergoes both rapid and slow structural rearrangements in response to changes in voltage. Contains a zinc-binding site that can regulate the slow conformational transition. The sequence is that of Transmembrane protein 266 from Macaca fascicularis (Crab-eating macaque).